Consider the following 247-residue polypeptide: Adenosylcobinamide-GDP ribazoletransferase (247 aa).

Helical transmembrane passes span 34–54, 59–79, 113–133, 138–158, and 194–214; these read IVMF…IFIL, CGIP…TGGF, GGLA…ELAL, VLAA…LLMY, and VLLP…AIFI.

Belongs to the CobS family. Mg(2+) serves as cofactor.

It is found in the cell inner membrane. It carries out the reaction alpha-ribazole + adenosylcob(III)inamide-GDP = adenosylcob(III)alamin + GMP + H(+). It catalyses the reaction alpha-ribazole 5'-phosphate + adenosylcob(III)inamide-GDP = adenosylcob(III)alamin 5'-phosphate + GMP + H(+). Its pathway is cofactor biosynthesis; adenosylcobalamin biosynthesis; adenosylcobalamin from cob(II)yrinate a,c-diamide: step 7/7. Joins adenosylcobinamide-GDP and alpha-ribazole to generate adenosylcobalamin (Ado-cobalamin). Also synthesizes adenosylcobalamin 5'-phosphate from adenosylcobinamide-GDP and alpha-ribazole 5'-phosphate. The sequence is that of Adenosylcobinamide-GDP ribazoletransferase from Salmonella arizonae (strain ATCC BAA-731 / CDC346-86 / RSK2980).